Here is a 170-residue protein sequence, read N- to C-terminus: FMRFamide-like neuropeptides 6 (170 aa).

A signal peptide spans 1-19 (MNSRGLILTLGVVIAVAFA). Q20 bears the Pyrrolidone carboxylic acid mark. Position 39 is a phenylalanine amide (F39). The propeptide occupies 42-51 (SDGGNPMEME). A Phenylalanine amide modification is found at F60. Positions 63–81 (RSSGGDEQELVGGDDIDME) are excised as a propeptide. F90 is subject to Phenylalanine amide. A propeptide spanning residues 93–104 (RSGPQEDDMPME) is cleaved from the precursor. Position 113 is a phenylalanine amide (F113). The propeptide occupies 116–136 (RSSDMEVIGNEGVDGDAHDLF). The residue at position 145 (F145) is a Phenylalanine amide. A propeptide spanning residues 148–159 (RSMGEEEDHDMM) is cleaved from the precursor. A disordered region spans residues 150–170 (MGEEEDHDMMKRKSAYMRFGR). The span at 159-170 (MKRKSAYMRFGR) shows a compositional bias: basic residues. Residue F168 is modified to Phenylalanine amide.

Belongs to the FARP (FMRFamide related peptide) family. Each flp gene is expressed in a distinct set of neurons. Flp-6 is expressed in the ASE sensory neurons, AFD, ASG, PVT and I1 neurons.

Its subcellular location is the secreted. Its function is as follows. FMRFamides and FMRFamide-like peptides are neuropeptides. KSAYMRF-amide has an excitatory effect on dissected pharyngeal myogenic muscle system. This Caenorhabditis elegans protein is FMRFamide-like neuropeptides 6.